The primary structure comprises 572 residues: Beta-fructofuranosidase, insoluble isoenzyme CWINV5 (572 aa).

The first 23 residues, 1–23, serve as a signal peptide directing secretion; it reads MANIVWCNIAMFLLVSLFLTDDA. Residues 54–57 and Q73 contribute to the substrate site; that span reads WMND. Residue D57 is part of the active site. The N-linked (GlcNAc...) asparagine glycan is linked to N84. A substrate-binding site is contributed by 118-119; sequence WS. N-linked (GlcNAc...) asparagine glycans are attached at residues N152 and N179. Residues 184–185 and E239 each bind substrate; that span reads RD. N-linked (GlcNAc...) asparagine glycans are attached at residues N333 and N438. A disulfide bridge connects residues C434 and C481.

Belongs to the glycosyl hydrolase 32 family. As to expression, expressed in flowers, and, to a lower extent, in leaves.

It is found in the secreted. The protein localises to the extracellular space. It localises to the apoplast. The protein resides in the cell wall. It carries out the reaction Hydrolysis of terminal non-reducing beta-D-fructofuranoside residues in beta-D-fructofuranosides.. The polypeptide is Beta-fructofuranosidase, insoluble isoenzyme CWINV5 (CWINV5) (Arabidopsis thaliana (Mouse-ear cress)).